The following is a 377-amino-acid chain: RING finger protein 215 (377 aa).

At 1-22 (MGPAARPALRSPPPPPPPPPSP) the chain is on the cytoplasmic side. Positions 1-22 (MGPAARPALRSPPPPPPPPPSP) are disordered. The span at 10-22 (RSPPPPPPPPPSP) shows a compositional bias: pro residues. Residues 23–43 (LLLLLPLLPLWLGLAGPGAAA) traverse the membrane as a helical segment. At 44–250 (DGSEPAAGAG…GGSRAQEQKP (207 aa)) the chain is on the extracellular side. The N-linked (GlcNAc...) asparagine glycan is linked to Asn186. Residues 251–271 (LQQLWNAILLVAMLLCTGLVV) traverse the membrane as a helical segment. Residues 272 to 377 (QAQRQASRQS…NVLGNRYSDD (106 aa)) are Cytoplasmic-facing. An RING-type; atypical zinc finger spans residues 325–366 (CAVCLDYFCNKQWLRVLPCKHEFHRDCVDPWLMLQQTCPLCK).

The protein localises to the membrane. The protein is RING finger protein 215 (RNF215) of Homo sapiens (Human).